The following is an 83-amino-acid chain: Major outer membrane lipoprotein (83 aa).

A signal peptide spans 1-19; that stretch reads MNNVLKFSALALAAVLATG. Residue C20 is the site of N-palmitoyl cysteine attachment. C20 carries S-diacylglycerol cysteine lipidation.

The protein localises to the cell outer membrane. This is Major outer membrane lipoprotein (oprI) from Pseudomonas aeruginosa (strain ATCC 15692 / DSM 22644 / CIP 104116 / JCM 14847 / LMG 12228 / 1C / PRS 101 / PAO1).